The sequence spans 426 residues: Histidine--tRNA ligase 1 (426 aa).

Belongs to the class-II aminoacyl-tRNA synthetase family. Homodimer.

The protein resides in the cytoplasm. It catalyses the reaction tRNA(His) + L-histidine + ATP = L-histidyl-tRNA(His) + AMP + diphosphate + H(+). This is Histidine--tRNA ligase 1 from Bacillus cereus (strain ATCC 14579 / DSM 31 / CCUG 7414 / JCM 2152 / NBRC 15305 / NCIMB 9373 / NCTC 2599 / NRRL B-3711).